Here is a 152-residue protein sequence, read N- to C-terminus: UPF0266 membrane protein YobD (152 aa).

The next 3 helical transmembrane spans lie at 6–26 (LVLI…QFIM), 45–65 (VDSV…VTSH), and 67–87 (AQMT…IFWI).

Belongs to the UPF0266 family.

The protein localises to the cell inner membrane. The polypeptide is UPF0266 membrane protein YobD (Salmonella agona (strain SL483)).